Reading from the N-terminus, the 149-residue chain is Large ribosomal subunit protein uL13 (149 aa).

It belongs to the universal ribosomal protein uL13 family. Part of the 50S ribosomal subunit.

Its function is as follows. This protein is one of the early assembly proteins of the 50S ribosomal subunit, although it is not seen to bind rRNA by itself. It is important during the early stages of 50S assembly. This Thermobifida fusca (strain YX) protein is Large ribosomal subunit protein uL13.